We begin with the raw amino-acid sequence, 380 residues long: Chaperone protein DnaJ (380 aa).

The region spanning 5–70 (DYYEVLGLQK…EKRAAYDQYG (66 aa)) is the J domain. A CR-type zinc finger spans residues 136-214 (GCKKDIRIST…CHGDGRVQKA (79 aa)). Zn(2+)-binding residues include Cys149, Cys152, Cys166, Cys169, Cys188, Cys191, Cys202, and Cys205. 4 CXXCXGXG motif repeats span residues 149-156 (CDTCHGSG), 166-173 (CSHCHGSG), 188-195 (CPSCHGSG), and 202-209 (CKSCHGDG).

This sequence belongs to the DnaJ family. As to quaternary structure, homodimer. The cofactor is Zn(2+).

Its subcellular location is the cytoplasm. Participates actively in the response to hyperosmotic and heat shock by preventing the aggregation of stress-denatured proteins and by disaggregating proteins, also in an autonomous, DnaK-independent fashion. Unfolded proteins bind initially to DnaJ; upon interaction with the DnaJ-bound protein, DnaK hydrolyzes its bound ATP, resulting in the formation of a stable complex. GrpE releases ADP from DnaK; ATP binding to DnaK triggers the release of the substrate protein, thus completing the reaction cycle. Several rounds of ATP-dependent interactions between DnaJ, DnaK and GrpE are required for fully efficient folding. Also involved, together with DnaK and GrpE, in the DNA replication of plasmids through activation of initiation proteins. This chain is Chaperone protein DnaJ, found in Actinobacillus pleuropneumoniae serotype 5b (strain L20).